The chain runs to 62 residues: Light-harvesting protein B-870 alpha chain (62 aa).

Methionine 1 is subject to N-formylmethionine. At 1–12 the chain is on the cytoplasmic side; it reads MWRIWQLFDPRQ. A helical transmembrane segment spans residues 13-33; it reads ALVGLATFLFVLALLIHFILL. Histidine 29 lines the a bacteriochlorophyll pocket. Topologically, residues 34-52 are periplasmic; that stretch reads STERFNWLEGASTKPVQTS. A propeptide spanning residues 53-62 is cleaved from the precursor; sequence MVMPSSDLAV.

It belongs to the antenna complex alpha subunit family. The core complex is formed by different alpha and beta chains, binding bacteriochlorophyll molecules, and arranged most probably in tetrameric structures disposed around the reaction center. The non-pigmented gamma chains may constitute additional components.

The protein localises to the cell inner membrane. Its function is as follows. Antenna complexes are light-harvesting systems, which transfer the excitation energy to the reaction centers. The chain is Light-harvesting protein B-870 alpha chain from Rhodospirillum rubrum.